The chain runs to 505 residues: Betaine aldehyde dehydrogenase 1 (505 aa).

163–172 (WNYPLLMATW) lines the betaine aldehyde pocket. Residue 240–245 (GSTETG) participates in NAD(+) binding. Residues Glu-262, 294-297 (QVCS), and Cys-455 each bind betaine aldehyde. Residues Glu-262 and Cys-296 contribute to the active site. 4-aminobutanal contacts are provided by residues 262-263 (EL) and Cys-296. Trp-461 contacts 4-aminobutanal. The Microbody targeting signal motif lies at 503–505 (SKL).

Belongs to the aldehyde dehydrogenase family. Homodimer.

It is found in the peroxisome. It catalyses the reaction betaine aldehyde + NAD(+) + H2O = glycine betaine + NADH + 2 H(+). The protein operates within amine and polyamine biosynthesis; betaine biosynthesis via choline pathway; betaine from betaine aldehyde: step 1/1. Functionally, dehydrogenase that can use N-acetyl-gamma-aminobutyraldehyde (NAGABald), gamma-guanidinobutyraldehyde (GGBald), betaine aldehyde (Bet-ald), gamma-aminobutyraldehyde (GAB-ald), acetaldehyde, 4-aminobutylaldehyde (AB-ald), 3-aminopropionaldehyde (AP-ald), 4-N-trimethylaminobutyraldehyde (TMAB-ald) and 3-N-trimethylaminopropionaldehyde (TMAP-ald) as substrates. Catalyzes the oxidation of GAB-ald more efficiently than Bet-ald. May convert acetaldehyde into acetate, thus facilitating the production of acetyl-CoA in peroxisomes under anaerobic conditions. In Oryza sativa subsp. japonica (Rice), this protein is Betaine aldehyde dehydrogenase 1 (BADH1).